The following is a 470-amino-acid chain: MRFSTLHFAFLATLSSIFTVVAASDTTTCSSSKHCPEDKPCCSQFGICGTGAYCLGGCDIRYSYNLTACMPMPRMSTFQESFDSKDKVKEIELQSDYLGNSTEADWVYTGWVDYYDNSLLIQMPNHTTGTVVSSTKYLWYGKVGATLKTSHDGGVVTAFILFSDVQDEIDYEFVGYNLTNPQSNYYSQGILNYNNSRNSSVNNTFEYYHNYEMDWTEDKIEWYIDGEKVRTLNKNDTWNETSNRYDYPQTPSRIQFSLWPGGDSSNAKGTIEWAGGLINWDSEDIKKYGYYYAHIKEIYATAYDIPNDVKLDGNSTKESDYHAFLYNSTDGDASNIMLTTKKTWLGSDDATGFDPQNDDEDSSSNKAQETTITSVSGSSTITSVKTDSTKKTANVPAQNTAAAAQATAKSSTGTNTYDPSAGVGGFVQDSKSTDSGSSGSSSQGVANSLNESVISGIFASICLGILSFFM.

Residues 1–23 form the signal peptide; that stretch reads MRFSTLHFAFLATLSSIFTVVAA. A disulfide bridge links Cys58 with Cys69. N-linked (GlcNAc...) asparagine glycosylation is found at Asn65, Asn100, and Asn125. The 188-residue stretch at 95–282 folds into the GH16 domain; that stretch reads SDYLGNSTEA…WAGGLINWDS (188 aa). Residue Glu168 is the Nucleophile of the active site. Residue Glu172 is the Proton donor of the active site. Residue Glu172 coordinates chitin. N-linked (GlcNAc...) asparagine glycans are attached at residues Asn177, Asn194, Asn198, Asn202, Asn235, and Asn239. Residues Trp259 and Thr270 each coordinate chitin. N-linked (GlcNAc...) asparagine glycans are attached at residues Asn314 and Asn327. The segment at 347 to 446 is disordered; that stretch reads SDDATGFDPQ…SSGSSSQGVA (100 aa). 2 stretches are compositionally biased toward low complexity: residues 370–384 and 392–408; these read TTIT…ITSV and TANV…QATA. The segment covering 409 to 418 has biased composition (polar residues); it reads KSSTGTNTYD. Low complexity predominate over residues 433–446; it reads TDSGSSGSSSQGVA. A lipid anchor (GPI-anchor amidated serine) is attached at Ser440. A propeptide spans 441-470 (removed in mature form); it reads SSQGVANSLNESVISGIFASICLGILSFFM. Residue Asn450 is glycosylated (N-linked (GlcNAc...) asparagine).

Belongs to the glycosyl hydrolase 16 family. CRH1 subfamily. The GPI-anchor is attached to the protein in the endoplasmic reticulum and serves to target the protein to the cell surface. There, the glucosamine-inositol phospholipid moiety is cleaved off and the GPI-modified mannoprotein is covalently attached via its lipidless GPI glycan remnant to the 1,6-beta-glucan of the outer cell wall layer.

The protein localises to the secreted. The protein resides in the cell wall. It is found in the membrane. It carries out the reaction Random endo-hydrolysis of N-acetyl-beta-D-glucosaminide (1-&gt;4)-beta-linkages in chitin and chitodextrins.. Its function is as follows. Dual chitinase/transglycosylase that plays a role in cell wall architecture. Chitinase and transglycosylase activities are coupled. Required for the polysaccharide cross-linking at the septa and the cell wall. More specifically, transfers chitin to 1,6-beta-glucan in the cell wall. Plays an important role in fungal pathogenesis via its functions in cell wall assembly and regeneration, filamentation, and adherence to host cells. Acts as a cell surface antigen in acute candidemia patients. The sequence is that of Crh-like protein UTR2 from Candida albicans (strain SC5314 / ATCC MYA-2876) (Yeast).